Reading from the N-terminus, the 79-residue chain is Putative Fis-like DNA-binding protein (79 aa).

The segment at residues Q55–I74 is a DNA-binding region (H-T-H motif).

The protein belongs to the transcriptional regulatory Fis family.

The sequence is that of Putative Fis-like DNA-binding protein from Neisseria meningitidis serogroup A / serotype 4A (strain DSM 15465 / Z2491).